The sequence spans 512 residues: Annexin A7 (512 aa).

Residues 14–38 show a composition bias toward low complexity; it reads GYPGGDPSYPPAAQQAFPGGQFPPA. 2 disordered regions span residues 14–62 and 146–190; these read GYPG…GYPH and GGFS…AQPT. Residues 39–52 show a composition bias toward gly residues; sequence AGGGAFPPASGGGN. Residues 164–182 show a composition bias toward low complexity; that stretch reads MPGQMPGQMPGQAPSGYPS. Annexin repeat units lie at residues 209–279, 280–351, 364–436, and 440–511; these read FDAL…ALFM, PSTY…SIMA, QQAE…AVLQ, and NRPL…AISG.

This sequence belongs to the annexin family.

Its function is as follows. Calcium/phospholipid-binding protein which promotes membrane fusion and is involved in exocytosis. This is Annexin A7 (anxa7) from Xenopus laevis (African clawed frog).